We begin with the raw amino-acid sequence, 271 residues long: uncharacterized protein (271 aa).

This is an uncharacterized protein from Galliformes (FAdV-1).